Consider the following 199-residue polypeptide: dCTP deaminase (199 aa).

Residues 110-115 (RSSLAR), Asp128, 136-138 (VLE), Tyr171, and Gln182 contribute to the dCTP site. Residue Glu138 is the Proton donor/acceptor of the active site.

This sequence belongs to the dCTP deaminase family. As to quaternary structure, homotrimer.

The enzyme catalyses dCTP + H2O + H(+) = dUTP + NH4(+). Its pathway is pyrimidine metabolism; dUMP biosynthesis; dUMP from dCTP (dUTP route): step 1/2. Catalyzes the deamination of dCTP to dUTP. The polypeptide is dCTP deaminase (Pseudoalteromonas atlantica (strain T6c / ATCC BAA-1087)).